The primary structure comprises 171 residues: Endoribonuclease YbeY (171 aa).

The Zn(2+) site is built by His130, His134, and His140.

This sequence belongs to the endoribonuclease YbeY family. Zn(2+) serves as cofactor.

It is found in the cytoplasm. In terms of biological role, single strand-specific metallo-endoribonuclease involved in late-stage 70S ribosome quality control and in maturation of the 3' terminus of the 16S rRNA. The polypeptide is Endoribonuclease YbeY (Neisseria gonorrhoeae (strain ATCC 700825 / FA 1090)).